The following is a 238-amino-acid chain: Large ribosomal subunit protein uL1 (238 aa).

Belongs to the universal ribosomal protein uL1 family. As to quaternary structure, part of the 50S ribosomal subunit.

Binds directly to 23S rRNA. The L1 stalk is quite mobile in the ribosome, and is involved in E site tRNA release. In terms of biological role, protein L1 is also a translational repressor protein, it controls the translation of the L11 operon by binding to its mRNA. The chain is Large ribosomal subunit protein uL1 from Nostoc sp. (strain PCC 7120 / SAG 25.82 / UTEX 2576).